A 446-amino-acid chain; its full sequence is tRNA-2-methylthio-N(6)-dimethylallyladenosine synthase (446 aa).

The region spanning 3–120 is the MTTase N-terminal domain; the sequence is KKLFIETHGC…LPEMIDAARS (118 aa). 6 residues coordinate [4Fe-4S] cluster: cysteine 12, cysteine 49, cysteine 83, cysteine 157, cysteine 161, and cysteine 164. The 233-residue stretch at 143-375 folds into the Radical SAM core domain; that stretch reads RVDGPTAFVS…QSRIHQQGYE (233 aa). Residues 378–442 form the TRAM domain; that stretch reads RRMVGSTQRI…PHSLRGTLID (65 aa).

It belongs to the methylthiotransferase family. MiaB subfamily. As to quaternary structure, monomer. [4Fe-4S] cluster serves as cofactor.

The protein localises to the cytoplasm. It carries out the reaction N(6)-dimethylallyladenosine(37) in tRNA + (sulfur carrier)-SH + AH2 + 2 S-adenosyl-L-methionine = 2-methylsulfanyl-N(6)-dimethylallyladenosine(37) in tRNA + (sulfur carrier)-H + 5'-deoxyadenosine + L-methionine + A + S-adenosyl-L-homocysteine + 2 H(+). Functionally, catalyzes the methylthiolation of N6-(dimethylallyl)adenosine (i(6)A), leading to the formation of 2-methylthio-N6-(dimethylallyl)adenosine (ms(2)i(6)A) at position 37 in tRNAs that read codons beginning with uridine. The protein is tRNA-2-methylthio-N(6)-dimethylallyladenosine synthase of Pseudomonas aeruginosa (strain UCBPP-PA14).